A 412-amino-acid chain; its full sequence is MTDTVELAKGDIISVEVLRPAHGGEGIGHHDGRVIFVKGGIPGDVVDVEIAQLKKKWARGEVVKVTTASADRVDSRCPAAAAGAGCCDYAELNPTVELEIKSRVLRDQLERIGGIDELPEFELQDLEPTAGWRTRVRLGVDASGRAGFRKLKSNELVTEVACSQVVPELLEGLVGEGARRFTPGVEIIAAIDDAGQRHVVESRKAPRGRRTETVLKVLEGTGEVEQKVGDYTWKFPVSSFWQAHTKAPAAYSEFIAEALTGLELVDVDKRGPVAWDLYGGVGLFAPIITSKLQAAVHSVELSPGSAEAGEEALAGLPVTFHTGRVEGMASQLPSPNVVVLDPPRTGAGSDVLKSIAEAKPQLVIHIGCDPATFARDVADWKLNGYEMDQLAVFNAFPGTHHFETIGVFVRVS.

Residues 6–64 enclose the TRAM domain; it reads ELAKGDIISVEVLRPAHGGEGIGHHDGRVIFVKGGIPGDVVDVEIAQLKKKWARGEVVK. S-adenosyl-L-methionine contacts are provided by glutamine 242, tyrosine 278, glutamate 300, and aspartate 341. The active-site Nucleophile is cysteine 368.

This sequence belongs to the class I-like SAM-binding methyltransferase superfamily. RNA M5U methyltransferase family.

This is an uncharacterized protein from Corynebacterium glutamicum (strain ATCC 13032 / DSM 20300 / JCM 1318 / BCRC 11384 / CCUG 27702 / LMG 3730 / NBRC 12168 / NCIMB 10025 / NRRL B-2784 / 534).